The primary structure comprises 170 residues: Macro domain-containing protein VPA0103 (170 aa).

Positions 1–170 (MNAISLVQGD…SIWQHALTQH (170 aa)) constitute a Macro domain.

This sequence belongs to the MacroD-type family.

This Vibrio parahaemolyticus serotype O3:K6 (strain RIMD 2210633) protein is Macro domain-containing protein VPA0103.